A 360-amino-acid polypeptide reads, in one-letter code: SPRY domain-containing SOCS box protein 3 (360 aa).

Positions R20–H55 are disordered. Residues L85–R274 enclose the B30.2/SPRY domain. The SOCS box domain maps to S264–W315. The interval R323–D350 is disordered. Positions T331–T346 are enriched in low complexity.

This sequence belongs to the SPSB family. Substrate-recognition component of the ECS(SPSB3) complex, composed of spsb3, cul5, elob, elob and rnf7/rbx2.

The protein localises to the nucleus. The protein operates within protein modification; protein ubiquitination. Its function is as follows. Substrate-recognition component of a cullin-5-RING E3 ubiquitin-protein ligase complex (ECS complex, also named CRL5 complex), which mediates the ubiquitination and subsequent proteasomal degradation of target proteins. In Xenopus tropicalis (Western clawed frog), this protein is SPRY domain-containing SOCS box protein 3 (spsb3).